We begin with the raw amino-acid sequence, 981 residues long: uncharacterized protein (981 aa).

The Carrier domain occupies 535-612 (VLLNPVAIEI…SIASIIQKKS (78 aa)). An O-(pantetheine 4'-phosphoryl)serine modification is found at Ser571.

The protein belongs to the ATP-dependent AMP-binding enzyme family.

This is an uncharacterized protein from Schizosaccharomyces pombe (strain 972 / ATCC 24843) (Fission yeast).